Reading from the N-terminus, the 352-residue chain is Transcriptional regulatory protein AlgP (352 aa).

Residues 128 to 352 (KALESRKAKP…SNGAAPTSAS (225 aa)) form a disordered region. The segment covering 138 to 341 (ATKPAAKAAA…SSAASATPAA (204 aa)) has biased composition (low complexity).

The promoter for a critical alginate biosynthetic gene, AlgD, encoding GDP-mannose dehydrogenase, is activated only under conditions reminiscent of the cystic fibrosis lung (i.e. under high osmolarity), and at least two regulatory genes, AlgP and AlgQ, have been implicated in this activation process. In Pseudomonas aeruginosa (strain ATCC 15692 / DSM 22644 / CIP 104116 / JCM 14847 / LMG 12228 / 1C / PRS 101 / PAO1), this protein is Transcriptional regulatory protein AlgP (algP).